Reading from the N-terminus, the 445-residue chain is Exodeoxyribonuclease 7 large subunit (445 aa).

The protein belongs to the XseA family. As to quaternary structure, heterooligomer composed of large and small subunits.

The protein localises to the cytoplasm. It carries out the reaction Exonucleolytic cleavage in either 5'- to 3'- or 3'- to 5'-direction to yield nucleoside 5'-phosphates.. In terms of biological role, bidirectionally degrades single-stranded DNA into large acid-insoluble oligonucleotides, which are then degraded further into small acid-soluble oligonucleotides. This chain is Exodeoxyribonuclease 7 large subunit, found in Delftia acidovorans (strain DSM 14801 / SPH-1).